The following is a 193-amino-acid chain: Orotate phosphoribosyltransferase (193 aa).

5-phospho-alpha-D-ribose 1-diphosphate is bound at residue 114–122; sequence EDVITTGGS. Residues threonine 118 and arginine 146 each coordinate orotate.

Belongs to the purine/pyrimidine phosphoribosyltransferase family. PyrE subfamily. In terms of assembly, homodimer. The cofactor is Mg(2+).

It catalyses the reaction orotidine 5'-phosphate + diphosphate = orotate + 5-phospho-alpha-D-ribose 1-diphosphate. It participates in pyrimidine metabolism; UMP biosynthesis via de novo pathway; UMP from orotate: step 1/2. In terms of biological role, catalyzes the transfer of a ribosyl phosphate group from 5-phosphoribose 1-diphosphate to orotate, leading to the formation of orotidine monophosphate (OMP). The polypeptide is Orotate phosphoribosyltransferase (Chlorobium phaeobacteroides (strain BS1)).